The chain runs to 546 residues: Chaperonin GroEL (546 aa).

Residues 30 to 33, Lys51, 87 to 91, Gly415, and Asp495 contribute to the ATP site; these read TLGP and DGTTT.

The protein belongs to the chaperonin (HSP60) family. As to quaternary structure, forms a cylinder of 14 subunits composed of two heptameric rings stacked back-to-back. Interacts with the co-chaperonin GroES.

It is found in the cytoplasm. It catalyses the reaction ATP + H2O + a folded polypeptide = ADP + phosphate + an unfolded polypeptide.. In terms of biological role, together with its co-chaperonin GroES, plays an essential role in assisting protein folding. The GroEL-GroES system forms a nano-cage that allows encapsulation of the non-native substrate proteins and provides a physical environment optimized to promote and accelerate protein folding. The chain is Chaperonin GroEL from Brucella suis (strain ATCC 23445 / NCTC 10510).